We begin with the raw amino-acid sequence, 752 residues long: Zinc finger protein 184 (752 aa).

In terms of domain architecture, KRAB spans 28-99; that stretch reads VTFKDVIVDF…EPSIPVGTPG (72 aa). S117, S122, and S200 each carry phosphoserine. Residue K207 forms a Glycyl lysine isopeptide (Lys-Gly) (interchain with G-Cter in SUMO2) linkage. 19 consecutive C2H2-type zinc fingers follow at residues 223–245, 251–273, 279–301, 307–329, 335–357, 363–385, 391–413, 419–441, 447–469, 475–497, 503–525, 531–553, 559–581, 587–609, 615–637, 643–665, 671–693, 699–721, and 727–749; these read CKCN…QRTH, YKCN…QRIH, YKCD…QRIH, YTCN…QKIH, FKCD…QKIH, YKCN…HMIH, YECN…QKTH, YDCA…LKIH, YKCN…RRIH, FECS…QKTH, YECK…ERIH, YQCH…RKIH, YKCN…KRIH, YECA…QKTH, YHCN…QRIH, YKCN…QNTH, YNCN…QRIH, and FGCN…QRLH.

The protein belongs to the krueppel C2H2-type zinc-finger protein family.

It is found in the nucleus. May be involved in transcriptional regulation. The chain is Zinc finger protein 184 (ZNF184) from Bos taurus (Bovine).